The chain runs to 132 residues: Putative apolipoprotein(a)-like protein 2 (132 aa).

Positions Met-1–Thr-21 are cleaved as a signal peptide. The 79-residue stretch at Glu-27–Cys-105 folds into the Kringle domain. 3 disulfides stabilise this stretch: Cys-28-Cys-105, Cys-49-Cys-88, and Cys-77-Cys-100. Residue Asn-101 is glycosylated (N-linked (GlcNAc...) asparagine).

Expressed in liver but not in other tissues tested.

It is found in the secreted. The protein is Putative apolipoprotein(a)-like protein 2 (LPAL2) of Homo sapiens (Human).